We begin with the raw amino-acid sequence, 185 residues long: Elongation factor P (185 aa).

This sequence belongs to the elongation factor P family.

Its subcellular location is the cytoplasm. It functions in the pathway protein biosynthesis; polypeptide chain elongation. Its function is as follows. Involved in peptide bond synthesis. Stimulates efficient translation and peptide-bond synthesis on native or reconstituted 70S ribosomes in vitro. Probably functions indirectly by altering the affinity of the ribosome for aminoacyl-tRNA, thus increasing their reactivity as acceptors for peptidyl transferase. The polypeptide is Elongation factor P (Geobacillus sp. (strain WCH70)).